The primary structure comprises 347 residues: NADH-ubiquinone oxidoreductase chain 2 (347 aa).

10 helical membrane passes run 4–21 (LALI…VIVM), 26–44 (WLLV…IPVL), 59–79 (YFLT…TNLL), 93–115 (LAST…HFWV), 149–169 (LNLN…GWGG), 178–198 (ILAY…TYNP), 200–220 (LTLL…MLFM), 241–261 (ATSV…SGFL), 274–294 (ESIF…YFYM), and 323–343 (TPLL…APIL).

This sequence belongs to the complex I subunit 2 family. As to quaternary structure, core subunit of respiratory chain NADH dehydrogenase (Complex I) which is composed of 45 different subunits. Interacts with TMEM242.

It localises to the mitochondrion inner membrane. The enzyme catalyses a ubiquinone + NADH + 5 H(+)(in) = a ubiquinol + NAD(+) + 4 H(+)(out). In terms of biological role, core subunit of the mitochondrial membrane respiratory chain NADH dehydrogenase (Complex I) which catalyzes electron transfer from NADH through the respiratory chain, using ubiquinone as an electron acceptor. Essential for the catalytic activity and assembly of complex I. The polypeptide is NADH-ubiquinone oxidoreductase chain 2 (Cardioderma cor (Heart-nosed bat)).